A 241-amino-acid chain; its full sequence is Ureidoacrylate amidohydrolase RutB (241 aa).

The Proton acceptor role is filled by D38. K147 is a catalytic residue. C180 functions as the Nucleophile in the catalytic mechanism.

The protein belongs to the isochorismatase family. RutB subfamily.

The enzyme catalyses (Z)-3-ureidoacrylate + H2O + H(+) = (Z)-3-aminoacrylate + NH4(+) + CO2. The catalysed reaction is (Z)-3-ureidoacrylate + H2O = (Z)-3-aminoacrylate + carbamate + H(+). It catalyses the reaction (Z)-2-methylureidoacrylate + H2O + H(+) = (Z)-2-methylaminoacrylate + NH4(+) + CO2. Hydrolyzes ureidoacrylate to form aminoacrylate and carbamate. The carbamate hydrolyzes spontaneously, thereby releasing one of the nitrogen atoms of the pyrimidine ring as ammonia and one of its carbon atoms as CO2. This is Ureidoacrylate amidohydrolase RutB from Haliangium ochraceum (strain DSM 14365 / JCM 11303 / SMP-2).